The following is a 218-amino-acid chain: Adenylate kinase (218 aa).

10 to 15 (GAGKGT) serves as a coordination point for ATP. Residues 30 to 59 (STGDMLRAAVKAGTPLGIEAKKVMDAGGLV) form an NMP region. AMP-binding positions include Thr31, Arg36, 57-59 (GLV), 85-88 (GFPR), and Gln92. Residues 122–159 (GRRSHAASGRTYHVKFNPPKVAGVDDVTGEPLIQRDDD) form an LID region. Residues Arg123 and 132–133 (TY) each bind ATP. 2 residues coordinate AMP: Arg156 and Arg167. Position 203 (Gly203) interacts with ATP.

It belongs to the adenylate kinase family. As to quaternary structure, monomer.

It localises to the cytoplasm. The enzyme catalyses AMP + ATP = 2 ADP. Its pathway is purine metabolism; AMP biosynthesis via salvage pathway; AMP from ADP: step 1/1. Its function is as follows. Catalyzes the reversible transfer of the terminal phosphate group between ATP and AMP. Plays an important role in cellular energy homeostasis and in adenine nucleotide metabolism. In Albidiferax ferrireducens (strain ATCC BAA-621 / DSM 15236 / T118) (Rhodoferax ferrireducens), this protein is Adenylate kinase.